Consider the following 103-residue polypeptide: DNA-directed RNA polymerase subunit omega (103 aa).

The disordered stretch occupies residues 52-103; the sequence is EIESGNVTIHPDPEGKREAVRRRIEEEKRRKEEEEKKIKEQIAKEKEDGEKI. The span at 62 to 103 shows a compositional bias: basic and acidic residues; the sequence is PDPEGKREAVRRRIEEEKRRKEEEEKKIKEQIAKEKEDGEKI.

It belongs to the RNA polymerase subunit omega family. As to quaternary structure, the RNAP catalytic core consists of 2 alpha, 1 beta, 1 beta' and 1 omega subunit. When a sigma factor is associated with the core the holoenzyme is formed, which can initiate transcription.

The catalysed reaction is RNA(n) + a ribonucleoside 5'-triphosphate = RNA(n+1) + diphosphate. Its function is as follows. Promotes RNA polymerase assembly. Latches the N- and C-terminal regions of the beta' subunit thereby facilitating its interaction with the beta and alpha subunits. This Streptococcus pneumoniae serotype 19F (strain G54) protein is DNA-directed RNA polymerase subunit omega.